The following is a 320-amino-acid chain: Cytochrome f (320 aa).

Residues 1 to 35 (MENRKTFSWLKEQMIRSISVSIMIYVITRTSISNA) form the signal peptide. Positions 36, 56, 59, and 60 each coordinate heme. Residues 286-305 (VQGLLFFFASVILAQVFLVL) form a helical membrane-spanning segment.

It belongs to the cytochrome f family. The 4 large subunits of the cytochrome b6-f complex are cytochrome b6, subunit IV (17 kDa polypeptide, petD), cytochrome f and the Rieske protein, while the 4 small subunits are PetG, PetL, PetM and PetN. The complex functions as a dimer. It depends on heme as a cofactor.

It is found in the plastid. It localises to the chloroplast thylakoid membrane. Functionally, component of the cytochrome b6-f complex, which mediates electron transfer between photosystem II (PSII) and photosystem I (PSI), cyclic electron flow around PSI, and state transitions. This is Cytochrome f (petA) from Zea mays (Maize).